Reading from the N-terminus, the 146-residue chain is Lipoprotein signal peptidase (146 aa).

The next 3 helical transmembrane spans lie at 6–26, 50–70, and 82–104; these read IFLL…TLFL, MFAF…GGIL, and YAFP…FVHA. Residues Asp-108 and Asp-125 contribute to the active site. The chain crosses the membrane as a helical span at residues 123 to 143; it reads FADVAIDLAVAWILIMVYFFP.

Belongs to the peptidase A8 family.

Its subcellular location is the cell inner membrane. The catalysed reaction is Release of signal peptides from bacterial membrane prolipoproteins. Hydrolyzes -Xaa-Yaa-Zaa-|-(S,diacylglyceryl)Cys-, in which Xaa is hydrophobic (preferably Leu), and Yaa (Ala or Ser) and Zaa (Gly or Ala) have small, neutral side chains.. It participates in protein modification; lipoprotein biosynthesis (signal peptide cleavage). Its function is as follows. This protein specifically catalyzes the removal of signal peptides from prolipoproteins. This Sulfurovum sp. (strain NBC37-1) protein is Lipoprotein signal peptidase.